The following is a 208-amino-acid chain: Uracil phosphoribosyltransferase (208 aa).

Residues Arg-78, Arg-103, and 130 to 138 (DPMLATGGS) each bind 5-phospho-alpha-D-ribose 1-diphosphate. Residues Ile-193 and 198-200 (GDA) each bind uracil. Asp-199 contributes to the 5-phospho-alpha-D-ribose 1-diphosphate binding site.

It belongs to the UPRTase family. Mg(2+) serves as cofactor.

The enzyme catalyses UMP + diphosphate = 5-phospho-alpha-D-ribose 1-diphosphate + uracil. The protein operates within pyrimidine metabolism; UMP biosynthesis via salvage pathway; UMP from uracil: step 1/1. With respect to regulation, allosterically activated by GTP. Its function is as follows. Catalyzes the conversion of uracil and 5-phospho-alpha-D-ribose 1-diphosphate (PRPP) to UMP and diphosphate. This chain is Uracil phosphoribosyltransferase, found in Glaesserella parasuis serovar 5 (strain SH0165) (Haemophilus parasuis).